The sequence spans 111 residues: Holo-[acyl-carrier-protein] synthase (111 aa).

2 residues coordinate Mg(2+): Asp-8 and Glu-57.

This sequence belongs to the P-Pant transferase superfamily. AcpS family. Mg(2+) serves as cofactor.

The protein resides in the cytoplasm. The catalysed reaction is apo-[ACP] + CoA = holo-[ACP] + adenosine 3',5'-bisphosphate + H(+). Functionally, transfers the 4'-phosphopantetheine moiety from coenzyme A to a Ser of acyl-carrier-protein. The sequence is that of Holo-[acyl-carrier-protein] synthase from Mycoplasmoides gallisepticum (strain R(low / passage 15 / clone 2)) (Mycoplasma gallisepticum).